The sequence spans 142 residues: Hemoglobin subunit alpha (142 aa).

Residue Ser1 is modified to N-acetylserine. The Globin domain occupies 1–142 (SLSDKDKNTV…LALALSERYR (142 aa)). His59 lines the O2 pocket. Residue His88 participates in heme b binding.

Belongs to the globin family. In terms of assembly, heterotetramer of two alpha chains and two beta chains. Can form polymers. Red blood cells.

Involved in oxygen transport from gills to the various peripheral tissues. This is Hemoglobin subunit alpha (hba) from Chelidonichthys kumu (Bluefin gurnard).